The chain runs to 78 residues: Disintegrin DisBa-01 (78 aa).

The Disintegrin domain occupies 1 to 78; sequence GNELLEAGEE…AGCPRNPFHA (78 aa). 6 disulfides stabilise this stretch: C11–C26, C13–C21, C20–C43, C34–C40, C39–C64, and C52–C71. A Cell attachment site motif is present at residues 56–58; it reads RGD.

Belongs to the venom metalloproteinase (M12B) family. P-II subfamily. P-IIa sub-subfamily. Monomer. In terms of tissue distribution, expressed by the venom gland.

It is found in the secreted. In terms of biological role, this recombinant disintegrin antagonizes integrins alpha-IIb/beta-3 (ITGA2B/ITGB3) and alpha-V/beta-3 (ITGAV/ITGB3). On ITGA2B/ITGB3, it interferes with the outside/-in phosphorylation of the focal adhesion kinase (PTK2 / FAK) downstream of the integrin. It strongly inhibits platelet aggregation induced by ADP, thrombin, and collagen, abolishes and reverses dynamic platelet recruitment to immobilized fibrinogen. In vivo, it induces a dramatic increase in the tail bleeding time, and has a strong antithrombotic activity. On ITGAV/ITGB3, it inhibits the adhesion of ITGAV/ITGB3-expressing human microvascular endothelial cell line and murine melanoma cell line to vitronectin (IC(50) are 555 nM and 225 nM, respectively), and transiently inhibits their proliferation without direct cell toxicity. In vivo, it potently inhibits angiogenesis and metastasis, probably due to its capability to strongly inhibit the expression of VEGF and its receptors in endothelial cells. It also inhibits tumor cell migration in vitro. The polypeptide is Disintegrin DisBa-01 (Bothrops alternatus (Urutu)).